The primary structure comprises 189 residues: Large ribosomal subunit protein bL17 (189 aa).

Residues 136–189 are disordered; that stretch reads KAAPAAEEEVVETEEAPAVEAEAAESEEAPAAEAEAAEAEAAETEEAPAAEDKK. A compositionally biased stretch (acidic residues) spans 141–189; sequence AEEEVVETEEAPAVEAEAAESEEAPAAEAEAAEAEAAETEEAPAAEDKK.

This sequence belongs to the bacterial ribosomal protein bL17 family. As to quaternary structure, part of the 50S ribosomal subunit. Contacts protein L32.

This is Large ribosomal subunit protein bL17 from Paenarthrobacter aurescens (strain TC1).